The following is a 197-amino-acid chain: Elongation factor Ts (197 aa).

Residues 81–84 (TDFV) form an involved in Mg(2+) ion dislocation from EF-Tu region.

The protein belongs to the EF-Ts family.

The protein resides in the cytoplasm. In terms of biological role, associates with the EF-Tu.GDP complex and induces the exchange of GDP to GTP. It remains bound to the aminoacyl-tRNA.EF-Tu.GTP complex up to the GTP hydrolysis stage on the ribosome. This is Elongation factor Ts from Coprothermobacter proteolyticus (strain ATCC 35245 / DSM 5265 / OCM 4 / BT).